Consider the following 617-residue polypeptide: UvrABC system protein C (617 aa).

The GIY-YIG domain maps to 22-100; that stretch reads KLPGVYRFFD…IKALSPKYNI (79 aa). Positions 209-244 constitute a UVR domain; that stretch reads DELTRTLQHKMQTAAANLQFEEAARYRDQIQALGII.

Belongs to the UvrC family. Interacts with UvrB in an incision complex.

Its subcellular location is the cytoplasm. Its function is as follows. The UvrABC repair system catalyzes the recognition and processing of DNA lesions. UvrC both incises the 5' and 3' sides of the lesion. The N-terminal half is responsible for the 3' incision and the C-terminal half is responsible for the 5' incision. This is UvrABC system protein C from Neisseria gonorrhoeae (strain ATCC 700825 / FA 1090).